The sequence spans 31 residues: Toxin BmKK12 (31 aa).

The residue at position 1 (Gln-1) is a Pyrrolidone carboxylic acid. 3 cysteine pairs are disulfide-bonded: Cys-4/Cys-20, Cys-10/Cys-25, and Cys-14/Cys-27. At Pro-31 the chain carries Proline amide.

Belongs to the short scorpion toxin superfamily. Potassium channel inhibitor family. Alpha-KTx 17 subfamily. In terms of processing, the N-terminus is blocked. As to expression, expressed by the venom gland.

It is found in the secreted. In terms of biological role, blocker of potassium channels (Kv). The polypeptide is Toxin BmKK12 (Olivierus martensii (Manchurian scorpion)).